The following is a 213-amino-acid chain: Redox-sensing transcriptional repressor Rex (213 aa).

Residues 17–56 (LYYRIFKRFYADQVEKASSKQIADAMGIDSATVRRDFSYF) constitute a DNA-binding region (H-T-H motif). 91–96 (GCGNIG) is an NAD(+) binding site.

This sequence belongs to the transcriptional regulatory Rex family. In terms of assembly, homodimer.

It localises to the cytoplasm. Modulates transcription in response to changes in cellular NADH/NAD(+) redox state. This is Redox-sensing transcriptional repressor Rex from Streptococcus uberis (strain ATCC BAA-854 / 0140J).